The sequence spans 173 residues: Ribosome maturation factor RimM (173 aa).

The region spanning Glu-92–Ile-165 is the PRC barrel domain.

It belongs to the RimM family. In terms of assembly, binds ribosomal protein uS19.

It is found in the cytoplasm. Its function is as follows. An accessory protein needed during the final step in the assembly of 30S ribosomal subunit, possibly for assembly of the head region. Essential for efficient processing of 16S rRNA. May be needed both before and after RbfA during the maturation of 16S rRNA. It has affinity for free ribosomal 30S subunits but not for 70S ribosomes. The sequence is that of Ribosome maturation factor RimM from Nitrobacter hamburgensis (strain DSM 10229 / NCIMB 13809 / X14).